The chain runs to 75 residues: uncharacterized protein (75 aa).

The dksA C4-type zinc-finger motif lies at 43-67 (CSECGLPIPTTRLRANPFAHRCVSC).

This is an uncharacterized protein from Haemophilus influenzae (strain ATCC 51907 / DSM 11121 / KW20 / Rd).